Consider the following 338-residue polypeptide: uncharacterized protein (338 aa).

A helical transmembrane segment spans residues 20–40; sequence IFFTLTFSLSNLFLAICYLFL.

The protein resides in the membrane. This is an uncharacterized protein from Schizosaccharomyces pombe (strain 972 / ATCC 24843) (Fission yeast).